Consider the following 277-residue polypeptide: Carbonyl reductase [NADPH] 3 (277 aa).

An N-acetylserine modification is found at Ser2. NADP(+) is bound by residues 10–34, 38–42, 63–64, and Asn90; these read VTGANKGIGFAITRDLCRKFSGDVV, RDEAR, and DI. At Ser30 the chain carries Phosphoserine. Ser140 provides a ligand contact to substrate. Residue Tyr194 is the Proton acceptor of the active site. 194–198 contributes to the NADP(+) binding site; it reads YGVSK.

The protein belongs to the short-chain dehydrogenases/reductases (SDR) family.

It localises to the cytoplasm. It catalyses the reaction a secondary alcohol + NADP(+) = a ketone + NADPH + H(+). The catalysed reaction is a quinone + NADPH + H(+) = a quinol + NADP(+). Its function is as follows. Catalyzes the NADPH-dependent reduction of carbonyl compounds to their corresponding alcohols. Has low NADPH-dependent oxidoreductase activity. Acts on several orthoquinones, as well as on non-quinone compounds, such as isatin or on the anticancer drug oracin. Best substrates for CBR3 is 1,2- naphthoquinone, hence could play a role in protection against cytotoxicity of exogenous quinones. Exerts activity toward ortho-quinones but not paraquinones. No endogenous substrate for CBR3 except isatin has been identified. In Rattus norvegicus (Rat), this protein is Carbonyl reductase [NADPH] 3.